A 129-amino-acid polypeptide reads, in one-letter code: UPF0102 protein RD1_1191 (129 aa).

This sequence belongs to the UPF0102 family.

The chain is UPF0102 protein RD1_1191 from Roseobacter denitrificans (strain ATCC 33942 / OCh 114) (Erythrobacter sp. (strain OCh 114)).